The following is a 528-amino-acid chain: UDP-glucuronosyltransferase 2B19 (528 aa).

The first 21 residues, 1 to 21 (MSMKWTSALLLIQLSCYLSFG), serve as a signal peptide directing secretion. Lys-135 is modified (N6-succinyllysine). N-linked (GlcNAc...) asparagine glycosylation is present at Asn-315. Residues 493-513 (VIGFLLACVATVIFIITKCLF) form a helical membrane-spanning segment.

It belongs to the UDP-glycosyltransferase family. In terms of tissue distribution, expressed in liver, ovary, prostate, colon, kidney, pancreas, brain, cerebellum, mammary gland and epididymis. Not expressed in small intestine, spleen, bladder, adrenal gland and testis.

The protein resides in the microsome membrane. It localises to the endoplasmic reticulum membrane. It carries out the reaction glucuronate acceptor + UDP-alpha-D-glucuronate = acceptor beta-D-glucuronoside + UDP + H(+). In terms of biological role, UDPGT is of major importance in the conjugation and subsequent elimination of potentially toxic xenobiotics and endogenous compounds. This isozyme displays activity toward several classes of xenobiotic substrates: eugenol, 4-methyllumbelliferone, p-nitrophenol, 1-naphthol, p,p'-biphenol, naringenin and o,o'-biphenol. Active also on 3a-hydroxy and 17b-hydroxy positions of steroids. Its function is as follows. Contributes to the formation of androgen glucuronide in extrahepatic steroid target tissues such as the prostate. The protein is UDP-glucuronosyltransferase 2B19 (UGT2B19) of Macaca fascicularis (Crab-eating macaque).